A 174-amino-acid polypeptide reads, in one-letter code: Shikimate kinase (174 aa).

Gly14–Thr19 serves as a coordination point for ATP. Residue Ser18 participates in Mg(2+) binding. Substrate contacts are provided by Asp36, Arg60, and Gly82. Arg120 lines the ATP pocket. Arg139 provides a ligand contact to substrate. Residue Gln156 participates in ATP binding.

The protein belongs to the shikimate kinase family. As to quaternary structure, monomer. It depends on Mg(2+) as a cofactor.

It is found in the cytoplasm. The catalysed reaction is shikimate + ATP = 3-phosphoshikimate + ADP + H(+). The protein operates within metabolic intermediate biosynthesis; chorismate biosynthesis; chorismate from D-erythrose 4-phosphate and phosphoenolpyruvate: step 5/7. In terms of biological role, catalyzes the specific phosphorylation of the 3-hydroxyl group of shikimic acid using ATP as a cosubstrate. In Vibrio cholerae serotype O1 (strain ATCC 39541 / Classical Ogawa 395 / O395), this protein is Shikimate kinase.